The chain runs to 312 residues: tRNA-cytidine(32) 2-sulfurtransferase (312 aa).

A PP-loop motif motif is present at residues 39–44; that stretch reads SGGKDS. [4Fe-4S] cluster contacts are provided by Cys-114, Cys-117, and Cys-205.

This sequence belongs to the TtcA family. As to quaternary structure, homodimer. Mg(2+) serves as cofactor. The cofactor is [4Fe-4S] cluster.

It localises to the cytoplasm. The enzyme catalyses cytidine(32) in tRNA + S-sulfanyl-L-cysteinyl-[cysteine desulfurase] + AH2 + ATP = 2-thiocytidine(32) in tRNA + L-cysteinyl-[cysteine desulfurase] + A + AMP + diphosphate + H(+). It functions in the pathway tRNA modification. Its function is as follows. Catalyzes the ATP-dependent 2-thiolation of cytidine in position 32 of tRNA, to form 2-thiocytidine (s(2)C32). The sulfur atoms are provided by the cysteine/cysteine desulfurase (IscS) system. The sequence is that of tRNA-cytidine(32) 2-sulfurtransferase from Cupriavidus pinatubonensis (strain JMP 134 / LMG 1197) (Cupriavidus necator (strain JMP 134)).